The sequence spans 122 residues: NADH-quinone oxidoreductase subunit A (122 aa).

The next 3 membrane-spanning stretches (helical) occupy residues 10–30 (LIIF…LTAG), 67–87 (FALL…WAVV), and 91–111 (LGLF…IGLI).

It belongs to the complex I subunit 3 family. As to quaternary structure, NDH-1 is composed of 14 different subunits. Subunits NuoA, H, J, K, L, M, N constitute the membrane sector of the complex.

Its subcellular location is the cell membrane. The catalysed reaction is a quinone + NADH + 5 H(+)(in) = a quinol + NAD(+) + 4 H(+)(out). Its function is as follows. NDH-1 shuttles electrons from NADH, via FMN and iron-sulfur (Fe-S) centers, to quinones in the respiratory chain. The immediate electron acceptor for the enzyme in this species is believed to be a menaquinone. Couples the redox reaction to proton translocation (for every two electrons transferred, four hydrogen ions are translocated across the cytoplasmic membrane), and thus conserves the redox energy in a proton gradient. This Geobacillus kaustophilus (strain HTA426) protein is NADH-quinone oxidoreductase subunit A.